A 60-amino-acid polypeptide reads, in one-letter code: Sec-independent protein translocase protein TatA (60 aa).

Residues 1–21 (MTPAGPAQLLIVALVVIVLFG) traverse the membrane as a helical segment.

The protein belongs to the TatA/E family. In terms of assembly, the Tat system comprises two distinct complexes: a TatABC complex, containing multiple copies of TatA, TatB and TatC subunits, and a separate TatA complex, containing only TatA subunits. Substrates initially bind to the TatABC complex, which probably triggers association of the separate TatA complex to form the active translocon.

Its subcellular location is the cell membrane. Functionally, part of the twin-arginine translocation (Tat) system that transports large folded proteins containing a characteristic twin-arginine motif in their signal peptide across membranes. TatA could form the protein-conducting channel of the Tat system. This chain is Sec-independent protein translocase protein TatA, found in Corynebacterium glutamicum (strain R).